A 122-amino-acid polypeptide reads, in one-letter code: Acidic phospholipase A2 5 (122 aa).

Intrachain disulfides connect cysteine 26/cysteine 115, cysteine 28/cysteine 44, cysteine 43/cysteine 95, cysteine 49/cysteine 122, cysteine 50/cysteine 88, cysteine 57/cysteine 81, and cysteine 75/cysteine 86. Ca(2+) is bound by residues phenylalanine 27, glycine 29, and glycine 31. Histidine 47 is an active-site residue. Residue aspartate 48 participates in Ca(2+) binding. Aspartate 89 is a catalytic residue.

The protein belongs to the phospholipase A2 family. Group II subfamily. D49 sub-subfamily. As to quaternary structure, monomer (predominant). Non-covalently linked homodimers are also observed. Ca(2+) is required as a cofactor. In terms of tissue distribution, expressed by the venom gland.

It is found in the secreted. It carries out the reaction a 1,2-diacyl-sn-glycero-3-phosphocholine + H2O = a 1-acyl-sn-glycero-3-phosphocholine + a fatty acid + H(+). Its activity is regulated as follows. Preincubation with heparin slightly increase the enzymatic activity. Functionally, snake venom phospholipase A2 (PLA2) that inhibits platelet aggregation induced by ADP, arachidonic acid and PAF. Acts in a enzymatic independent manner on a proteinase-activated receptor (PAR1, F2R) to evoke calcium release through the inositol 1,4,5-trisphosphate receptor (ITPR1, IP3R) and induces mouse aorta contraction. PAR1, phospholipase C and IP3R inhibitors suppress PA2-induced aorta contraction. PLA2 catalyzes the calcium-dependent hydrolysis of the 2-acyl groups in 3-sn-phosphoglycerides. The polypeptide is Acidic phospholipase A2 5 (Trimeresurus stejnegeri (Chinese green tree viper)).